Reading from the N-terminus, the 325-residue chain is Small ribosomal subunit biogenesis GTPase RsgA (325 aa).

The 162-residue stretch at 80-241 (LSKQIHIIAS…IIDTPGIKGF (162 aa)) folds into the CP-type G domain. GTP-binding positions include 129–132 (NKID) and 183–191 (GHSGVGKST). Residues Cys265, Cys270, His272, and Cys278 each coordinate Zn(2+).

This sequence belongs to the TRAFAC class YlqF/YawG GTPase family. RsgA subfamily. In terms of assembly, monomer. Associates with 30S ribosomal subunit, binds 16S rRNA. Zn(2+) serves as cofactor.

It localises to the cytoplasm. Its function is as follows. One of several proteins that assist in the late maturation steps of the functional core of the 30S ribosomal subunit. Helps release RbfA from mature subunits. May play a role in the assembly of ribosomal proteins into the subunit. Circularly permuted GTPase that catalyzes slow GTP hydrolysis, GTPase activity is stimulated by the 30S ribosomal subunit. The protein is Small ribosomal subunit biogenesis GTPase RsgA of Flavobacterium johnsoniae (strain ATCC 17061 / DSM 2064 / JCM 8514 / BCRC 14874 / CCUG 350202 / NBRC 14942 / NCIMB 11054 / UW101) (Cytophaga johnsonae).